Reading from the N-terminus, the 74-residue chain is MSAFKLPDTSQSQLISTAELAKIISYKSQTIRKWLCQDKLPEGLPRPKQINGRHYWLRKDVLDFIDTFSVRESL.

This chain is Protein YkgV, found in Escherichia coli (strain K12).